We begin with the raw amino-acid sequence, 204 residues long: Matrix-remodeling-associated protein 7 (204 aa).

Residues 7–27 form a helical membrane-spanning segment; the sequence is LLAALPALATALALLLAWLLV. The segment at 32–148 is disordered; it reads AASPEPARAP…FSFKYSPGKL (117 aa). Residues 38 to 47 show a composition bias toward pro residues; the sequence is ARAPPEPAPP. Low complexity predominate over residues 63–103; that stretch reads EPAASPAGPEEPGEPAGLGELGEPAGPGEPEGPGDPAAAPA. The span at 110-126 shows a compositional bias: basic and acidic residues; it reads VEARQEEEQDLDGEKGP. Residue Ser-191 is modified to Phosphoserine.

It localises to the membrane. The protein is Matrix-remodeling-associated protein 7 (MXRA7) of Homo sapiens (Human).